A 425-amino-acid polypeptide reads, in one-letter code: Septin-11 (425 aa).

Ala2 is modified (N-acetylalanine). The residue at position 9 (Ser9) is a Phosphoserine. The Septin-type G domain occupies 38-304 (QGFCFNILCV…ELYRRCKLEE (267 aa)). Positions 48-55 (GETGIGKS) are G1 motif. Residues 48–55 (GETGIGKS), Gly103, 184–192 (KADTIAKNE), Gly238, and Arg253 contribute to the GTP site. The segment at 100 to 103 (DTVG) is G3 motif. The segment at 183–186 (AKAD) is G4 motif. The stretch at 320–410 (QETYEAKRNE…AAQLLQSQAQ (91 aa)) forms a coiled coil. Positions 399–425 (KAAAQLLQSQAQQSGAQQTKKDKDKKN) are disordered. Positions 401-416 (AAQLLQSQAQQSGAQQ) are enriched in low complexity.

This sequence belongs to the TRAFAC class TrmE-Era-EngA-EngB-Septin-like GTPase superfamily. Septin GTPase family. As to quaternary structure, septins polymerize into heterooligomeric protein complexes that form filaments, and can associate with cellular membranes, actin filaments and microtubules. Forms homooligomers. GTPase activity is required for filament formation. Interacts with SEPTIN7, SEPTIN9 and SEPTIN12.

The protein resides in the cytoplasm. It localises to the cytoskeleton. It is found in the synapse. Its subcellular location is the cell projection. The protein localises to the dendritic spine. The protein resides in the axon. Its function is as follows. Filament-forming cytoskeletal GTPase. May play a role in cytokinesis (Potential). May play a role in the cytoarchitecture of neurons, including dendritic arborization and dendritic spines, and in GABAergic synaptic connectivity. The chain is Septin-11 from Bos taurus (Bovine).